Consider the following 67-residue polypeptide: ORF2p protein (67 aa).

The segment at 13–18 is important for viral replication in intestinal cells; the sequence is WIGHPV. A transmembrane span lies at residues 22-38; the sequence is AIIYPFVGFIPLSLKEV.

It localises to the host cytoplasmic vesicle membrane. Functionally, facilitates virus release from intestinal cells in vitro, possibly through the host autophagic pathway. The sequence is that of ORF2p protein from Homo sapiens (Human).